A 302-amino-acid chain; its full sequence is Sulfate adenylyltransferase subunit 2 (302 aa).

It belongs to the PAPS reductase family. CysD subfamily. In terms of assembly, heterodimer composed of CysD, the smaller subunit, and CysN.

It carries out the reaction sulfate + ATP + H(+) = adenosine 5'-phosphosulfate + diphosphate. The protein operates within sulfur metabolism; hydrogen sulfide biosynthesis; sulfite from sulfate: step 1/3. With CysN forms the ATP sulfurylase (ATPS) that catalyzes the adenylation of sulfate producing adenosine 5'-phosphosulfate (APS) and diphosphate, the first enzymatic step in sulfur assimilation pathway. APS synthesis involves the formation of a high-energy phosphoric-sulfuric acid anhydride bond driven by GTP hydrolysis by CysN coupled to ATP hydrolysis by CysD. The polypeptide is Sulfate adenylyltransferase subunit 2 (Buchnera aphidicola subsp. Acyrthosiphon pisum (strain 5A)).